The primary structure comprises 65 residues: uncharacterized protein (65 aa).

This is an uncharacterized protein from Saccharolobus islandicus (Sulfolobus islandicus).